Here is a 447-residue protein sequence, read N- to C-terminus: 3-phosphoshikimate 1-carboxyvinyltransferase (447 aa).

Residues 1 to 22 (MTPSLKRLSGAMRARPAPALSG) are disordered. 3 residues coordinate 3-phosphoshikimate: Lys-30, Ser-31, and Arg-35. Lys-30 contributes to the phosphoenolpyruvate binding site. Residues Gly-102 and Arg-130 each contribute to the phosphoenolpyruvate site. 3-phosphoshikimate is bound by residues Ser-173, Gln-175, Asp-325, and Lys-352. Gln-175 provides a ligand contact to phosphoenolpyruvate. The active-site Proton acceptor is the Asp-325. Phosphoenolpyruvate is bound by residues Arg-356 and Arg-401.

It belongs to the EPSP synthase family. Monomer.

It localises to the cytoplasm. The catalysed reaction is 3-phosphoshikimate + phosphoenolpyruvate = 5-O-(1-carboxyvinyl)-3-phosphoshikimate + phosphate. Its pathway is metabolic intermediate biosynthesis; chorismate biosynthesis; chorismate from D-erythrose 4-phosphate and phosphoenolpyruvate: step 6/7. In terms of biological role, catalyzes the transfer of the enolpyruvyl moiety of phosphoenolpyruvate (PEP) to the 5-hydroxyl of shikimate-3-phosphate (S3P) to produce enolpyruvyl shikimate-3-phosphate and inorganic phosphate. The sequence is that of 3-phosphoshikimate 1-carboxyvinyltransferase from Maricaulis maris (strain MCS10) (Caulobacter maris).